A 693-amino-acid polypeptide reads, in one-letter code: Serine/threonine-protein kinase Pkn1 (693 aa).

The Protein kinase domain maps to 59 to 328; the sequence is FRLVRRLGRG…QVALAEHVRV (270 aa). Residues 65-73 and lysine 88 contribute to the ATP site; that span reads LGRGGMGAV. The active-site Proton acceptor is the aspartate 180. In terms of domain architecture, PilZ spans 393-491; sequence LVEVPVQVVL…LKAAVDALLQ (99 aa). The stretch at 630–663 is one TPR repeat; it reads ARSHFQSGGALERDGQLSQALDQYERGLKLAPLE.

The protein belongs to the protein kinase superfamily. Ser/Thr protein kinase family. Autophosphorylated.

It carries out the reaction L-seryl-[protein] + ATP = O-phospho-L-seryl-[protein] + ADP + H(+). The enzyme catalyses L-threonyl-[protein] + ATP = O-phospho-L-threonyl-[protein] + ADP + H(+). Its activity is regulated as follows. May be regulated by calcium or a calmodulin-like protein. Functionally, plays an essential role in proper timing of early development events. In Myxococcus xanthus, this protein is Serine/threonine-protein kinase Pkn1 (pkn1).